Here is a 370-residue protein sequence, read N- to C-terminus: Tryptophan--tRNA ligase (370 aa).

Residues Pro-75–His-83 carry the 'HIGH' region motif. A 'KMSKS' region motif is present at residues Lys-255–Ser-259.

Belongs to the class-I aminoacyl-tRNA synthetase family.

The protein localises to the cytoplasm. It carries out the reaction tRNA(Trp) + L-tryptophan + ATP = L-tryptophyl-tRNA(Trp) + AMP + diphosphate + H(+). The sequence is that of Tryptophan--tRNA ligase from Methanocaldococcus jannaschii (strain ATCC 43067 / DSM 2661 / JAL-1 / JCM 10045 / NBRC 100440) (Methanococcus jannaschii).